The chain runs to 728 residues: MDKETIKAHKISDEEYAQILEILGREPNLLELGVISAMWSEHCSYKSSKKYLNGFPTKAPWVIQGPGENAGVIDIGQGMAAVFKVESHNHPSFIEPFAGAATGVGGILRDVFTMGARVVAGLNSLKFGDIHDEKCGKHQKYLVKGVVNGISHYGNCMGVPTIGGECAFDECFNGNILVNAFALGVCKSEDIFYAKAEGVGNPVIYVGSKTGRDGLGGAVMASDSFNEESKSLRPTVQIGDPFSEKLLMEACLELFKTDYIVGIQDMGAAGLTSSSFEMAGRSGSGMKLYLDKTPMRESGMTPYELMLSESQERMLICAKKGYEDKVIEIFKKWDLDAVVMGEVTNTGKMELFWHDELVGLIPIEPLSEKAPILSRPTSEPKYLSEIKNYKFELKSSIQELFIQMLQNENINNKAFIYDQFDSSVQTNTIKADGKLGASVIRIKENGASVAMAIECNSRLNYVNPKIGAALAVASAGRKVACTGAKPLAISDCLNYGNPQNPEVMWQFAQGCEGIKEACKELNTPVVSGNVSLYNETEGVSIYPSPTIVSVGVLEDANKTLKASFEKENLSVYLLGESLGEFGGSMVMKIQDKKVSGSLKELDYKAELALWDLLYKANQNSLLECANSVGIGGIAMTLAKMFAISSVGANLTSDFDDEKMIFDESASRAIIGLSKENEEAFLNLAKEFGVKAYKLGVSTSQKHFKLDSIELSKAELDKLYFESFKEQIQ.

The active site involves histidine 42. Positions 45 and 84 each coordinate ATP. Residue glutamate 86 participates in Mg(2+) binding. Residues 87 to 90 (SHNH) and arginine 109 each bind substrate. The Proton acceptor role is filled by histidine 88. Mg(2+) is bound at residue aspartate 110. Substrate is bound at residue glutamine 237. A Mg(2+)-binding site is contributed by aspartate 265. 309–311 (ESQ) is a binding site for substrate. ATP contacts are provided by aspartate 491 and glycine 528. Asparagine 529 is a binding site for Mg(2+). Serine 531 serves as a coordination point for substrate.

It belongs to the FGAMS family. In terms of assembly, monomer. Part of the FGAM synthase complex composed of 1 PurL, 1 PurQ and 2 PurS subunits.

It is found in the cytoplasm. The enzyme catalyses N(2)-formyl-N(1)-(5-phospho-beta-D-ribosyl)glycinamide + L-glutamine + ATP + H2O = 2-formamido-N(1)-(5-O-phospho-beta-D-ribosyl)acetamidine + L-glutamate + ADP + phosphate + H(+). Its pathway is purine metabolism; IMP biosynthesis via de novo pathway; 5-amino-1-(5-phospho-D-ribosyl)imidazole from N(2)-formyl-N(1)-(5-phospho-D-ribosyl)glycinamide: step 1/2. Its function is as follows. Part of the phosphoribosylformylglycinamidine synthase complex involved in the purines biosynthetic pathway. Catalyzes the ATP-dependent conversion of formylglycinamide ribonucleotide (FGAR) and glutamine to yield formylglycinamidine ribonucleotide (FGAM) and glutamate. The FGAM synthase complex is composed of three subunits. PurQ produces an ammonia molecule by converting glutamine to glutamate. PurL transfers the ammonia molecule to FGAR to form FGAM in an ATP-dependent manner. PurS interacts with PurQ and PurL and is thought to assist in the transfer of the ammonia molecule from PurQ to PurL. The polypeptide is Phosphoribosylformylglycinamidine synthase subunit PurL (Campylobacter jejuni subsp. jejuni serotype O:6 (strain 81116 / NCTC 11828)).